The chain runs to 179 residues: Fas apoptotic inhibitory molecule 1 (179 aa).

Residue Thr2 is modified to N-acetylthreonine.

This sequence belongs to the FAIM1 family.

The protein resides in the cytoplasm. Functionally, plays a role as an inducible effector molecule that mediates Fas resistance produced by surface Ig engagement in B cells. The protein is Fas apoptotic inhibitory molecule 1 (FAIM) of Homo sapiens (Human).